We begin with the raw amino-acid sequence, 875 residues long: Alanine--tRNA ligase (875 aa).

His-564, His-568, Cys-666, and His-670 together coordinate Zn(2+).

It belongs to the class-II aminoacyl-tRNA synthetase family. As to quaternary structure, homotetramer. Requires Zn(2+) as cofactor.

It is found in the cytoplasm. The enzyme catalyses tRNA(Ala) + L-alanine + ATP = L-alanyl-tRNA(Ala) + AMP + diphosphate. Functionally, catalyzes the attachment of alanine to tRNA(Ala) in a two-step reaction: alanine is first activated by ATP to form Ala-AMP and then transferred to the acceptor end of tRNA(Ala). Also edits incorrectly charged Ser-tRNA(Ala) and Gly-tRNA(Ala) via its editing domain. The sequence is that of Alanine--tRNA ligase from Enterobacter sp. (strain 638).